A 541-amino-acid polypeptide reads, in one-letter code: MNAIVEQLKSTAAATKATDLRAAFAADSERFSRFSVSLDDLLMDFSKTAVNDDILKLLVKLAEEGGVEKKREEMFSGKVINFTEDRAVLHTALRNRSNTPVLVDGKDVMPDVNAVLAAMGKFADGVRSGALKGATGKAITDVINIGIGGSDLGPVMATLALAPFHDGPRAHFVSNIDGAHIADILKLVQPETTLFIVASKTFTTVETMTNAQTARNFIAKALGEAAVQHHFAAVSTALDKVAAFGIDSARVFGFWDWVGGRYSIWSAIGLPLMIAIGPENFGKFLDGAHAVDNHFRQAPITENLPMLLGLIGFYHRNVLEYPTRAILPYDQRLSRFPAYLQQLDMESNGKGVTINGTPVEGNSGPVVWGEPGTNGQHAFYQLIHQGTSIIPAEFMIAANAFEPELRHQHQLLISNVLAQSEALMKGRSFAEAKKQLTDKGMDDKKADFIAPHRVFTGNRPSITFVYDKLTPYALGRLIALYEHRVFVEGVLFRINSFDQWGVELGKELATGLLPVVEGKESAAGHDSSTQGLVAALSKLAK.

E346 acts as the Proton donor in catalysis. Active-site residues include H377 and K506.

It belongs to the GPI family.

It localises to the cytoplasm. The enzyme catalyses alpha-D-glucose 6-phosphate = beta-D-fructose 6-phosphate. Its pathway is carbohydrate biosynthesis; gluconeogenesis. The protein operates within carbohydrate degradation; glycolysis; D-glyceraldehyde 3-phosphate and glycerone phosphate from D-glucose: step 2/4. Catalyzes the reversible isomerization of glucose-6-phosphate to fructose-6-phosphate. This Rhizobium leguminosarum bv. trifolii (strain WSM2304) protein is Glucose-6-phosphate isomerase.